Here is a 189-residue protein sequence, read N- to C-terminus: Glutathione-dependent formaldehyde-activating enzyme (189 aa).

The region spanning 20 to 167 (FAGGTLVCKC…LKELGLEPYD (148 aa)) is the CENP-V/GFA domain. 7 residues coordinate Zn(2+): Cys-27, Cys-29, Cys-48, Cys-50, Cys-53, Cys-95, and Cys-98.

This sequence belongs to the Gfa family. The cofactor is Zn(2+).

It carries out the reaction S-(hydroxymethyl)glutathione = glutathione + formaldehyde. The protein operates within one-carbon metabolism; formaldehyde degradation; formate from formaldehyde (glutathione route): step 1/3. Its function is as follows. Catalyzes the condensation of formaldehyde and glutathione to S-hydroxymethylglutathione. This chain is Glutathione-dependent formaldehyde-activating enzyme, found in Rhodopseudomonas palustris (strain BisB18).